A 268-amino-acid chain; its full sequence is Pantothenate synthetase (268 aa).

Residue 18–25 (MGYLHEGH) coordinates ATP. Catalysis depends on His-25, which acts as the Proton donor. Gln-49 contributes to the (R)-pantoate binding site. Residue Gln-49 coordinates beta-alanine. An ATP-binding site is contributed by 135 to 138 (GQKD). Gln-141 lines the (R)-pantoate pocket. ATP is bound by residues Val-164 and 172–175 (LSSR).

Belongs to the pantothenate synthetase family. In terms of assembly, homodimer.

It localises to the cytoplasm. It carries out the reaction (R)-pantoate + beta-alanine + ATP = (R)-pantothenate + AMP + diphosphate + H(+). The protein operates within cofactor biosynthesis; (R)-pantothenate biosynthesis; (R)-pantothenate from (R)-pantoate and beta-alanine: step 1/1. In terms of biological role, catalyzes the condensation of pantoate with beta-alanine in an ATP-dependent reaction via a pantoyl-adenylate intermediate. In Dehalococcoides mccartyi (strain ATCC BAA-2266 / KCTC 15142 / 195) (Dehalococcoides ethenogenes (strain 195)), this protein is Pantothenate synthetase.